Consider the following 73-residue polypeptide: Large ribosomal subunit protein bL31 (73 aa).

The Zn(2+) site is built by Cys-16, Cys-18, Cys-38, and Cys-41.

It belongs to the bacterial ribosomal protein bL31 family. Type A subfamily. Part of the 50S ribosomal subunit. Zn(2+) serves as cofactor.

Its function is as follows. Binds the 23S rRNA. The protein is Large ribosomal subunit protein bL31 of Streptomyces avermitilis (strain ATCC 31267 / DSM 46492 / JCM 5070 / NBRC 14893 / NCIMB 12804 / NRRL 8165 / MA-4680).